Consider the following 88-residue polypeptide: HssA/B-like protein 64 (88 aa).

Positions 1-24 are enriched in low complexity; sequence MTLFSSISSMSSSMTSSKSSFASF. 2 disordered regions span residues 1–25 and 45–88; these read MTLF…ASFG and GVSS…GNSC. Positions 56-66 are enriched in gly residues; it reads AKSGGDCGGKG.

Belongs to the hssA/B family.

The chain is HssA/B-like protein 64 (hssl64) from Dictyostelium discoideum (Social amoeba).